The chain runs to 203 residues: A-type ATP synthase subunit E (203 aa).

The protein belongs to the V-ATPase E subunit family. Might form a homodimer. Interacts with subunit H via residues 41-60. The A-type ATPase is composed of subunits A(3), B(3), C, D, E(1 or 2), F, H(2), I and K(x).

The protein localises to the cell membrane. Functionally, component of the A-type ATP synthase that produces ATP from ADP in the presence of a proton gradient across the membrane. The protein is A-type ATP synthase subunit E of Methanocaldococcus jannaschii (strain ATCC 43067 / DSM 2661 / JAL-1 / JCM 10045 / NBRC 100440) (Methanococcus jannaschii).